We begin with the raw amino-acid sequence, 144 residues long: 6-pyruvoyl tetrahydrobiopterin synthase (144 aa).

Ser18 carries the post-translational modification Phosphoserine. Position 23 (His23) interacts with Zn(2+). Ser27 bears the Phosphoserine mark. The active-site Proton acceptor is the Cys42. Zn(2+) is bound by residues His48 and His50. His89 functions as the Charge relay system in the catalytic mechanism. Residue Tyr127 is modified to Phosphotyrosine. The active-site Charge relay system is Glu133.

The protein belongs to the PTPS family. As to quaternary structure, homodimer. Homohexamer formed of two homotrimers in a head to head fashion. Requires Zn(2+) as cofactor. In terms of processing, phosphorylation of Ser-18 is required for maximal enzyme activity.

The enzyme catalyses 7,8-dihydroneopterin 3'-triphosphate = 6-pyruvoyl-5,6,7,8-tetrahydropterin + triphosphate + H(+). The protein operates within cofactor biosynthesis; tetrahydrobiopterin biosynthesis; tetrahydrobiopterin from 7,8-dihydroneopterin triphosphate: step 1/3. Involved in the biosynthesis of tetrahydrobiopterin, an essential cofactor of aromatic amino acid hydroxylases. Catalyzes the transformation of 7,8-dihydroneopterin triphosphate into 6-pyruvoyl tetrahydropterin. This Mus musculus (Mouse) protein is 6-pyruvoyl tetrahydrobiopterin synthase.